A 571-amino-acid polypeptide reads, in one-letter code: Putative pyruvate decarboxylase C13A11.06 (571 aa).

D29 and H118 together coordinate pyruvate. Thiamine diphosphate is bound by residues T395 and 418-420 (GSI). Residue D450 coordinates Mg(2+). Thiamine diphosphate is bound by residues 451–452 (GS) and 477–482 (NDGYTI). 2 residues coordinate Mg(2+): N477 and G479. E483 contacts pyruvate.

It belongs to the TPP enzyme family. Homotetramer. Mg(2+) serves as cofactor. The cofactor is thiamine diphosphate.

It catalyses the reaction a 2-oxocarboxylate + H(+) = an aldehyde + CO2. The enzyme catalyses pyruvate + H(+) = acetaldehyde + CO2. The protein is Putative pyruvate decarboxylase C13A11.06 of Schizosaccharomyces pombe (strain 972 / ATCC 24843) (Fission yeast).